The primary structure comprises 271 residues: Putative two-component membrane permease complex subunit SMU_746c (271 aa).

The next 2 membrane-spanning stretches (helical) occupy residues 34–54 (LAYI…TIWM) and 70–90 (FFSP…PTVP).

Belongs to the UPF0703 family. In terms of assembly, interacts with SMU_747c.

The protein resides in the cell membrane. In terms of biological role, could be part of a two-component membrane permease system responsible for amino acid transport under low pH. Involved in acidogenesis, biofilm formation and low-pH survival. The chain is Putative two-component membrane permease complex subunit SMU_746c from Streptococcus mutans serotype c (strain ATCC 700610 / UA159).